The primary structure comprises 416 residues: MEKLYVEGNKILNGHVIISGSKNAALPILFMTILTEGKIKIGNIPNLTDINIALKLLVYLGVKITGNETLCIDASSINIFCPPYNLINKIRASIWMLGPLLARFGKAKIFLPGGCKIGSRPIDLHLNGLTQLGATINLKNNCIDAYVKGRLQGKYILMEKISVGATITIMSAATLAKGSTIIDNAACEPEIVDIAKFLNTLGADIIGAGSNKICIKGVLKLTGGTHQVIPDRIETGTFLVAAAASQGHITCHKTEPKHLTNVLMKLTEAGAKIKTGKDWIKLDMRGKRPKSLNICTAPYPGFPTDMQAQFALLNSISKGIGTITETIFENRFIYTSELIRMGAKIKIKNNTIICYGIPKLISSNVFSSDLRASATLILAGCIAAGITIVNHTYHLVRGYESFPKKLNKIGANIKII.

A phosphoenolpyruvate-binding site is contributed by 22-23 (KN). Arg-91 contributes to the UDP-N-acetyl-alpha-D-glucosamine binding site. Cys-115 (proton donor) is an active-site residue. Cys-115 carries the post-translational modification 2-(S-cysteinyl)pyruvic acid O-phosphothioketal. UDP-N-acetyl-alpha-D-glucosamine contacts are provided by residues 120-124 (RPIDL), Asp-305, and Ile-327.

The protein belongs to the EPSP synthase family. MurA subfamily.

Its subcellular location is the cytoplasm. The catalysed reaction is phosphoenolpyruvate + UDP-N-acetyl-alpha-D-glucosamine = UDP-N-acetyl-3-O-(1-carboxyvinyl)-alpha-D-glucosamine + phosphate. It participates in cell wall biogenesis; peptidoglycan biosynthesis. Cell wall formation. Adds enolpyruvyl to UDP-N-acetylglucosamine. This Buchnera aphidicola subsp. Acyrthosiphon pisum (strain APS) (Acyrthosiphon pisum symbiotic bacterium) protein is UDP-N-acetylglucosamine 1-carboxyvinyltransferase.